A 273-amino-acid polypeptide reads, in one-letter code: Formamidopyrimidine-DNA glycosylase (273 aa).

The active-site Schiff-base intermediate with DNA is the Pro-2. Residue Glu-3 is the Proton donor of the active site. Lys-57 (proton donor; for beta-elimination activity) is an active-site residue. DNA-binding residues include His-91, Arg-110, and Lys-151. Residues 236–270 (QVYGRKGEACNDCGTIIEAKVIGQRNSYFCPHCQI) form an FPG-type zinc finger. Catalysis depends on Arg-260, which acts as the Proton donor; for delta-elimination activity.

The protein belongs to the FPG family. In terms of assembly, monomer. The cofactor is Zn(2+).

The catalysed reaction is Hydrolysis of DNA containing ring-opened 7-methylguanine residues, releasing 2,6-diamino-4-hydroxy-5-(N-methyl)formamidopyrimidine.. It carries out the reaction 2'-deoxyribonucleotide-(2'-deoxyribose 5'-phosphate)-2'-deoxyribonucleotide-DNA = a 3'-end 2'-deoxyribonucleotide-(2,3-dehydro-2,3-deoxyribose 5'-phosphate)-DNA + a 5'-end 5'-phospho-2'-deoxyribonucleoside-DNA + H(+). Involved in base excision repair of DNA damaged by oxidation or by mutagenic agents. Acts as a DNA glycosylase that recognizes and removes damaged bases. Has a preference for oxidized purines, such as 7,8-dihydro-8-oxoguanine (8-oxoG). Has AP (apurinic/apyrimidinic) lyase activity and introduces nicks in the DNA strand. Cleaves the DNA backbone by beta-delta elimination to generate a single-strand break at the site of the removed base with both 3'- and 5'-phosphates. The sequence is that of Formamidopyrimidine-DNA glycosylase from Actinobacillus pleuropneumoniae serotype 7 (strain AP76).